The following is a 371-amino-acid chain: 4-hydroxy-3-methylbut-2-en-1-yl diphosphate synthase (flavodoxin) (371 aa).

The [4Fe-4S] cluster site is built by C270, C273, C305, and E312.

The protein belongs to the IspG family. [4Fe-4S] cluster is required as a cofactor.

It catalyses the reaction (2E)-4-hydroxy-3-methylbut-2-enyl diphosphate + oxidized [flavodoxin] + H2O + 2 H(+) = 2-C-methyl-D-erythritol 2,4-cyclic diphosphate + reduced [flavodoxin]. It participates in isoprenoid biosynthesis; isopentenyl diphosphate biosynthesis via DXP pathway; isopentenyl diphosphate from 1-deoxy-D-xylulose 5-phosphate: step 5/6. Functionally, converts 2C-methyl-D-erythritol 2,4-cyclodiphosphate (ME-2,4cPP) into 1-hydroxy-2-methyl-2-(E)-butenyl 4-diphosphate. The protein is 4-hydroxy-3-methylbut-2-en-1-yl diphosphate synthase (flavodoxin) of Shewanella baltica (strain OS223).